A 219-amino-acid polypeptide reads, in one-letter code: RING-H2 finger protein ATL78 (219 aa).

Residues valine 57–isoleucine 77 form a helical membrane-spanning segment. The RING-type; atypical zinc-finger motif lies at cysteine 131–arginine 173.

The protein belongs to the RING-type zinc finger family. ATL subfamily.

The protein resides in the membrane. It catalyses the reaction S-ubiquitinyl-[E2 ubiquitin-conjugating enzyme]-L-cysteine + [acceptor protein]-L-lysine = [E2 ubiquitin-conjugating enzyme]-L-cysteine + N(6)-ubiquitinyl-[acceptor protein]-L-lysine.. It functions in the pathway protein modification; protein ubiquitination. The sequence is that of RING-H2 finger protein ATL78 (ATL78) from Arabidopsis thaliana (Mouse-ear cress).